A 267-amino-acid polypeptide reads, in one-letter code: tRNA-cytidine(32) 2-sulfurtransferase 2 (267 aa).

A PP-loop motif motif is present at residues 42–47 (SGGKDS). Residues C117, C120, and C208 each contribute to the [4Fe-4S] cluster site.

Belongs to the TtcA family. In terms of assembly, homodimer. Requires Mg(2+) as cofactor. [4Fe-4S] cluster serves as cofactor.

The protein resides in the cytoplasm. The enzyme catalyses cytidine(32) in tRNA + S-sulfanyl-L-cysteinyl-[cysteine desulfurase] + AH2 + ATP = 2-thiocytidine(32) in tRNA + L-cysteinyl-[cysteine desulfurase] + A + AMP + diphosphate + H(+). It functions in the pathway tRNA modification. Functionally, catalyzes the ATP-dependent 2-thiolation of cytidine in position 32 of tRNA, to form 2-thiocytidine (s(2)C32). The sulfur atoms are provided by the cysteine/cysteine desulfurase (IscS) system. The chain is tRNA-cytidine(32) 2-sulfurtransferase 2 from Francisella tularensis subsp. holarctica (strain FTNF002-00 / FTA).